The following is a 461-amino-acid chain: V-type ATP synthase beta chain (461 aa).

This sequence belongs to the ATPase alpha/beta chains family.

Its function is as follows. Produces ATP from ADP in the presence of a proton gradient across the membrane. The V-type beta chain is a regulatory subunit. The sequence is that of V-type ATP synthase beta chain from Streptococcus pneumoniae (strain CGSP14).